Reading from the N-terminus, the 185-residue chain is GTP cyclohydrolase 1 (185 aa).

Positions 76, 79, and 147 each coordinate Zn(2+).

Belongs to the GTP cyclohydrolase I family. As to quaternary structure, toroid-shaped homodecamer, composed of two pentamers of five dimers.

The catalysed reaction is GTP + H2O = 7,8-dihydroneopterin 3'-triphosphate + formate + H(+). It participates in cofactor biosynthesis; 7,8-dihydroneopterin triphosphate biosynthesis; 7,8-dihydroneopterin triphosphate from GTP: step 1/1. This is GTP cyclohydrolase 1 from Clostridium perfringens (strain ATCC 13124 / DSM 756 / JCM 1290 / NCIMB 6125 / NCTC 8237 / Type A).